A 452-amino-acid chain; its full sequence is Ribosomal protein uS12 methylthiotransferase RimO (452 aa).

Residues 3-118 (GKIGFVSLGC…VMQAIHLHLP (116 aa)) enclose the MTTase N-terminal domain. Residues Cys12, Cys48, Cys77, Cys149, Cys153, and Cys156 each coordinate [4Fe-4S] cluster. One can recognise a Radical SAM core domain in the interval 135-381 (LTPKHYAYLK…MAKAEDISIK (247 aa)). Residues 384 to 452 (AKKIGKRVQV…SQGHDLIAET (69 aa)) form the TRAM domain.

It belongs to the methylthiotransferase family. RimO subfamily. Requires [4Fe-4S] cluster as cofactor.

It is found in the cytoplasm. It catalyses the reaction L-aspartate(89)-[ribosomal protein uS12]-hydrogen + (sulfur carrier)-SH + AH2 + 2 S-adenosyl-L-methionine = 3-methylsulfanyl-L-aspartate(89)-[ribosomal protein uS12]-hydrogen + (sulfur carrier)-H + 5'-deoxyadenosine + L-methionine + A + S-adenosyl-L-homocysteine + 2 H(+). In terms of biological role, catalyzes the methylthiolation of an aspartic acid residue of ribosomal protein uS12. The protein is Ribosomal protein uS12 methylthiotransferase RimO of Polynucleobacter asymbioticus (strain DSM 18221 / CIP 109841 / QLW-P1DMWA-1) (Polynucleobacter necessarius subsp. asymbioticus).